Consider the following 499-residue polypeptide: Endoglucanase (499 aa).

An N-terminal signal peptide occupies residues 1-29 (MKRSISIFITCLLITLLTMGGMIASPASA). Substrate is bound by residues H65, 69-70 (WY), Y96, and H131. E169 serves as the catalytic Proton donor. Y231 is a binding site for substrate. E257 acts as the Nucleophile in catalysis. Substrate is bound by residues 263–264 (AS), W291, and 296–298 (KQE). The CBM3 domain occupies 350-499 (QENGISVQYR…GKLIWGTEPN (150 aa)).

Belongs to the glycosyl hydrolase 5 (cellulase A) family.

It catalyses the reaction Endohydrolysis of (1-&gt;4)-beta-D-glucosidic linkages in cellulose, lichenin and cereal beta-D-glucans.. The sequence is that of Endoglucanase (eglS) from Bacillus subtilis (strain 168).